The sequence spans 267 residues: Cyclin-C (267 aa).

Residues 48–151 (IQVLGEQLKL…LLENLDCCLI (104 aa)) form the Cyclin N-terminal domain.

It belongs to the cyclin family. Cyclin C subfamily. As to quaternary structure, component of the Cdk8 module of the Mediator complex.

The protein localises to the nucleus. Its function is as follows. Component of the Mediator complex, a coactivator involved in regulated gene transcription of nearly all RNA polymerase II-dependent genes. Mediator functions as a bridge to convey information from gene-specific regulatory proteins to the basal RNA polymerase II transcription machinery. Mediator is recruited to promoters by direct interactions with regulatory proteins and serves as a scaffold for the assembly of a functional preinitiation complex with RNA polymerase II and the general transcription factors. Binds to and activates cyclin-dependent kinase Cdk8 that phosphorylates the CTD (C-terminal domain) of the large subunit of RNA polymerase II (RNAp II), which may inhibit the formation of a transcription initiation complex. This chain is Cyclin-C (CycC), found in Drosophila pseudoobscura pseudoobscura (Fruit fly).